A 167-amino-acid chain; its full sequence is MRYAGTAHKVGDHIDTDAIIPARFLVTTDAQKLGENCMEGLEHGWVARVKSGDIMVGGRNFGCGSSREHAPIAILGAGMPVVVAHSFARIFYRNGFNMGLLLLEVGDDVDKIADGDDIEVDAASGVITNRTTGATITCAPVPQSMRELLDTGGLVPYVRARLERENG.

This sequence belongs to the LeuD family. LeuD type 2 subfamily. Heterodimer of LeuC and LeuD.

It catalyses the reaction (2R,3S)-3-isopropylmalate = (2S)-2-isopropylmalate. It participates in amino-acid biosynthesis; L-leucine biosynthesis; L-leucine from 3-methyl-2-oxobutanoate: step 2/4. In terms of biological role, catalyzes the isomerization between 2-isopropylmalate and 3-isopropylmalate, via the formation of 2-isopropylmaleate. This chain is 3-isopropylmalate dehydratase small subunit, found in Nitratidesulfovibrio vulgaris (strain ATCC 29579 / DSM 644 / CCUG 34227 / NCIMB 8303 / VKM B-1760 / Hildenborough) (Desulfovibrio vulgaris).